The sequence spans 415 residues: Methylthioribose-1-phosphate isomerase (415 aa).

D284 serves as the catalytic Proton donor.

The protein belongs to the eIF-2B alpha/beta/delta subunits family. MtnA subfamily.

Its subcellular location is the cytoplasm. The protein resides in the nucleus. The enzyme catalyses 5-(methylsulfanyl)-alpha-D-ribose 1-phosphate = 5-(methylsulfanyl)-D-ribulose 1-phosphate. Its pathway is amino-acid biosynthesis; L-methionine biosynthesis via salvage pathway; L-methionine from S-methyl-5-thio-alpha-D-ribose 1-phosphate: step 1/6. Catalyzes the interconversion of methylthioribose-1-phosphate (MTR-1-P) into methylthioribulose-1-phosphate (MTRu-1-P). The chain is Methylthioribose-1-phosphate isomerase from Vanderwaltozyma polyspora (strain ATCC 22028 / DSM 70294 / BCRC 21397 / CBS 2163 / NBRC 10782 / NRRL Y-8283 / UCD 57-17) (Kluyveromyces polysporus).